The following is a 216-amino-acid chain: Ras-related protein RABA1a (216 aa).

A GTP-binding site is contributed by 20-27 (GDSGVGKS). Positions 42-50 (SKSTIGVEF) match the Effector region motif. Residues 68–72 (DTAGQ), 126–129 (NKCD), and 156–157 (SA) each bind GTP. 2 S-geranylgeranyl cysteine lipidation sites follow: Cys-213 and Cys-214.

This sequence belongs to the small GTPase superfamily. Rab family.

It localises to the cell membrane. In terms of biological role, involved in auxin-mediated response. May be involved in vesicle trafficking of components involved in polar auxin transport. Binds GTP and GDP and possesses intrinsic GTPase activity. This chain is Ras-related protein RABA1a (RABA1A), found in Arabidopsis thaliana (Mouse-ear cress).